We begin with the raw amino-acid sequence, 478 residues long: Alpha-1,3-mannosyl-glycoprotein 4-beta-N-acetylglucosaminyltransferase C (478 aa).

The Cytoplasmic segment spans residues 1-23; it reads MFKFHQVKHIFEILDKMRCLRKR. Residues 24–44 traverse the membrane as a helical; Signal-anchor for type II membrane protein segment; the sequence is FTVSFLGVLVIFLLFMNLYIE. Residues 45–478 lie on the Lumenal side of the membrane; it reads DSYVLEGDKQ…IIRSISIWTS (434 aa). Residues N84, N215, and N348 are each glycosylated (N-linked (GlcNAc...) asparagine).

It belongs to the glycosyltransferase 54 family. It depends on a divalent metal cation as a cofactor.

The protein localises to the golgi apparatus membrane. The catalysed reaction is N(4)-{beta-D-GlcNAc-(1-&gt;2)-alpha-D-Man-(1-&gt;3)-[beta-D-GlcNAc-(1-&gt;2)-alpha-D-Man-(1-&gt;6)]-beta-D-Man-(1-&gt;4)-beta-D-GlcNAc-(1-&gt;4)-beta-D-GlcNAc}-L-asparaginyl-[protein] + UDP-N-acetyl-alpha-D-glucosamine = N(4)-{beta-D-GlcNAc-(1-&gt;2)-[beta-D-GlcNAc-(1-&gt;4)]-alpha-D-Man-(1-&gt;3)-[beta-D-GlcNAc-(1-&gt;2)-alpha-D-Man-(1-&gt;6)]-beta-D-Man-(1-&gt;4)-beta-D-GlcNAc-(1-&gt;4)-beta-D-GlcNAc}-L-asparaginyl-[protein] + UDP + H(+). It functions in the pathway protein modification; protein glycosylation. Functionally, glycosyltransferase that participates in the transfer of N-acetylglucosamine (GlcNAc) to the core mannose residues of N-linked glycans. Catalyzes the formation of the GlcNAcbeta1-4 branch on the GlcNAcbeta1-2Manalpha1-3 arm of the core structure of N-linked glycans. Essential for the production of tri- and tetra-antennary N-linked sugar chains. Does not catalyze the transfer of GlcNAc to the Manalpha1-6 arm to form GlcNAcBeta1-4Manalpha1-6 linkage ('GnT-VI' activity). This Sus scrofa (Pig) protein is Alpha-1,3-mannosyl-glycoprotein 4-beta-N-acetylglucosaminyltransferase C (MGAT4C).